Reading from the N-terminus, the 901-residue chain is Protein translocase subunit SecA (901 aa).

Residues Gln-87, 105–109, and Asp-512 each bind ATP; that span reads GEGKT. Residues 855 to 891 are disordered; sequence QQLSHQDDETAAAAALAEQTGERKVGRNDPCPCGSGK. The Zn(2+) site is built by Cys-885, Cys-887, Cys-896, and His-897.

It belongs to the SecA family. As to quaternary structure, monomer and homodimer. Part of the essential Sec protein translocation apparatus which comprises SecA, SecYEG and auxiliary proteins SecDF-YajC and YidC. The cofactor is Zn(2+).

It is found in the cell inner membrane. Its subcellular location is the cytoplasm. The catalysed reaction is ATP + H2O + cellular proteinSide 1 = ADP + phosphate + cellular proteinSide 2.. In terms of biological role, part of the Sec protein translocase complex. Interacts with the SecYEG preprotein conducting channel. Has a central role in coupling the hydrolysis of ATP to the transfer of proteins into and across the cell membrane, serving both as a receptor for the preprotein-SecB complex and as an ATP-driven molecular motor driving the stepwise translocation of polypeptide chains across the membrane. The protein is Protein translocase subunit SecA of Cronobacter sakazakii (strain ATCC BAA-894) (Enterobacter sakazakii).